We begin with the raw amino-acid sequence, 198 residues long: Recombination protein RecR (198 aa).

A C4-type zinc finger spans residues 57 to 72 (CSVCGNITDEDPCEIC). The Toprim domain maps to 80–175 (EMILVVEQPK…KVTRLAHGLA (96 aa)).

This sequence belongs to the RecR family.

May play a role in DNA repair. It seems to be involved in an RecBC-independent recombinational process of DNA repair. It may act with RecF and RecO. The polypeptide is Recombination protein RecR (Latilactobacillus sakei subsp. sakei (strain 23K) (Lactobacillus sakei subsp. sakei)).